Here is a 520-residue protein sequence, read N- to C-terminus: Cytochrome P450 716A67 (520 aa).

The helical transmembrane segment at 4-24 threads the bilayer; that stretch reads SLAIYYGIILITVTLGLVYTW. C466 provides a ligand contact to heme.

The protein belongs to the cytochrome P450 family. Heme serves as cofactor.

It is found in the membrane. Functionally, catalyzes hydroxylation at the C-2 position of different intermediates of the hemolytic sapogenin biosynthetic pathway downstream of oleanolic acid synthesis. In Medicago truncatula (Barrel medic), this protein is Cytochrome P450 716A67.